The sequence spans 480 residues: Protein nucleotidyltransferase YdiU (480 aa).

Residues G86, G88, R89, K109, D121, G122, R172, and R179 each coordinate ATP. Residue D248 is the Proton acceptor of the active site. The Mg(2+) site is built by N249 and D258. D258 serves as a coordination point for ATP.

This sequence belongs to the SELO family. Mg(2+) serves as cofactor. Mn(2+) is required as a cofactor.

It carries out the reaction L-seryl-[protein] + ATP = 3-O-(5'-adenylyl)-L-seryl-[protein] + diphosphate. The catalysed reaction is L-threonyl-[protein] + ATP = 3-O-(5'-adenylyl)-L-threonyl-[protein] + diphosphate. The enzyme catalyses L-tyrosyl-[protein] + ATP = O-(5'-adenylyl)-L-tyrosyl-[protein] + diphosphate. It catalyses the reaction L-histidyl-[protein] + UTP = N(tele)-(5'-uridylyl)-L-histidyl-[protein] + diphosphate. It carries out the reaction L-seryl-[protein] + UTP = O-(5'-uridylyl)-L-seryl-[protein] + diphosphate. The catalysed reaction is L-tyrosyl-[protein] + UTP = O-(5'-uridylyl)-L-tyrosyl-[protein] + diphosphate. Functionally, nucleotidyltransferase involved in the post-translational modification of proteins. It can catalyze the addition of adenosine monophosphate (AMP) or uridine monophosphate (UMP) to a protein, resulting in modifications known as AMPylation and UMPylation. This Salmonella paratyphi C (strain RKS4594) protein is Protein nucleotidyltransferase YdiU.